A 439-amino-acid chain; its full sequence is Xylose isomerase (439 aa).

Catalysis depends on residues histidine 101 and aspartate 104. Mg(2+)-binding residues include glutamate 232, glutamate 268, histidine 271, aspartate 296, aspartate 307, aspartate 309, and aspartate 339.

It belongs to the xylose isomerase family. In terms of assembly, homotetramer. The cofactor is Mg(2+).

The protein resides in the cytoplasm. The catalysed reaction is alpha-D-xylose = alpha-D-xylulofuranose. The polypeptide is Xylose isomerase (Serratia proteamaculans (strain 568)).